The following is a 125-amino-acid chain: Small ribosomal subunit protein uS12c (125 aa).

Residues 104–125 (ASGVKDRKQGRSKYGGKRPKGD) form a disordered region. Positions 113–125 (GRSKYGGKRPKGD) are enriched in basic residues.

This sequence belongs to the universal ribosomal protein uS12 family. In terms of assembly, part of the 30S ribosomal subunit.

The protein resides in the plastid. It is found in the chloroplast. Its function is as follows. With S4 and S5 plays an important role in translational accuracy. Located at the interface of the 30S and 50S subunits. The chain is Small ribosomal subunit protein uS12c (rps12) from Emiliania huxleyi (Coccolithophore).